The following is a 428-amino-acid chain: Zinc-type alcohol dehydrogenase B (428 aa).

Cysteine 116, histidine 137, cysteine 167, cysteine 170, cysteine 173, and cysteine 181 together coordinate Zn(2+). Lysine 393 carries the N6-benzoyllysine modification.

The protein belongs to the zinc-containing alcohol dehydrogenase family. Class-III subfamily. In terms of assembly, homodimer. It depends on Zn(2+) as a cofactor. Post-translationally, benzoylation at lys-393 by gcnE leads to the activation od adhB.

It catalyses the reaction a primary alcohol + NAD(+) = an aldehyde + NADH + H(+). It carries out the reaction a secondary alcohol + NAD(+) = a ketone + NADH + H(+). Zinc-type alcohol dehydrogenase involved in development, secondary metabolism, pathogenicity, and stress response. Specifically controls the formation of sclerotia and the biosynthesis of aflatoxin. Contribute to seed colonization of A flavus on host maize seed. The sequence is that of Zinc-type alcohol dehydrogenase B from Aspergillus flavus (strain ATCC 200026 / FGSC A1120 / IAM 13836 / NRRL 3357 / JCM 12722 / SRRC 167).